Consider the following 160-residue polypeptide: Ribosomal RNA large subunit methyltransferase H (160 aa).

Residues leucine 77, glycine 109, and 128-133 (LSNLTF) contribute to the S-adenosyl-L-methionine site.

The protein belongs to the RNA methyltransferase RlmH family. In terms of assembly, homodimer.

It localises to the cytoplasm. The catalysed reaction is pseudouridine(1915) in 23S rRNA + S-adenosyl-L-methionine = N(3)-methylpseudouridine(1915) in 23S rRNA + S-adenosyl-L-homocysteine + H(+). Its function is as follows. Specifically methylates the pseudouridine at position 1915 (m3Psi1915) in 23S rRNA. This chain is Ribosomal RNA large subunit methyltransferase H, found in Desulforamulus reducens (strain ATCC BAA-1160 / DSM 100696 / MI-1) (Desulfotomaculum reducens).